Here is a 194-residue protein sequence, read N- to C-terminus: Small ribosomal subunit protein uS4c (194 aa).

Residues 13-36 (GLTSKRPRSGSDPKNQLRSGKKSQ) form a disordered region. The S4 RNA-binding domain occupies 82 to 143 (MRLDNILFRL…KQRSKALIQN (62 aa)).

Belongs to the universal ribosomal protein uS4 family. Part of the 30S ribosomal subunit. Contacts protein S5. The interaction surface between S4 and S5 is involved in control of translational fidelity.

Its subcellular location is the plastid. It localises to the chloroplast. One of the primary rRNA binding proteins, it binds directly to 16S rRNA where it nucleates assembly of the body of the 30S subunit. Its function is as follows. With S5 and S12 plays an important role in translational accuracy. This is Small ribosomal subunit protein uS4c (rps4) from Moraea spathulata (Large yellow moraea).